Reading from the N-terminus, the 674-residue chain is Translation factor GUF1, mitochondrial (674 aa).

A mitochondrion-targeting transit peptide spans 1 to 48; that stretch reads MRGCLQPARWLTTATLRRPLLSCPRQLPTRYNPFPRPFHHAPVLQARQ. Positions 66–246 constitute a tr-type G domain; the sequence is ERYRNFCIVA…AIIESIPALL (181 aa). GTP-binding positions include 75–82, 139–143, and 193–196; these read AHVDHGKS, DTPGH, and NKVD.

The protein belongs to the TRAFAC class translation factor GTPase superfamily. Classic translation factor GTPase family. LepA subfamily.

The protein resides in the mitochondrion inner membrane. It catalyses the reaction GTP + H2O = GDP + phosphate + H(+). Its function is as follows. Promotes mitochondrial protein synthesis. May act as a fidelity factor of the translation reaction, by catalyzing a one-codon backward translocation of tRNAs on improperly translocated ribosomes. Binds to mitochondrial ribosomes in a GTP-dependent manner. The chain is Translation factor GUF1, mitochondrial from Arthroderma otae (strain ATCC MYA-4605 / CBS 113480) (Microsporum canis).